The following is a 115-amino-acid chain: NADH-ubiquinone oxidoreductase chain 3 (115 aa).

A run of 3 helical transmembrane segments spans residues 4-24, 55-75, and 86-106; these read LMAL…AFWL, FFLV…LLPL, and TMML…AYEW.

The protein belongs to the complex I subunit 3 family. Core subunit of respiratory chain NADH dehydrogenase (Complex I) which is composed of 45 different subunits. Interacts with TMEM186. Interacts with TMEM242.

The protein localises to the mitochondrion inner membrane. It catalyses the reaction a ubiquinone + NADH + 5 H(+)(in) = a ubiquinol + NAD(+) + 4 H(+)(out). Functionally, core subunit of the mitochondrial membrane respiratory chain NADH dehydrogenase (Complex I) which catalyzes electron transfer from NADH through the respiratory chain, using ubiquinone as an electron acceptor. Essential for the catalytic activity of complex I. This chain is NADH-ubiquinone oxidoreductase chain 3, found in Peromyscus gossypinus (Cotton deermouse).